Consider the following 292-residue polypeptide: Ribosomal protein L11 methyltransferase (292 aa).

Residues Thr-144, Gly-165, Asp-187, and Asn-229 each contribute to the S-adenosyl-L-methionine site.

The protein belongs to the methyltransferase superfamily. PrmA family.

Its subcellular location is the cytoplasm. It carries out the reaction L-lysyl-[protein] + 3 S-adenosyl-L-methionine = N(6),N(6),N(6)-trimethyl-L-lysyl-[protein] + 3 S-adenosyl-L-homocysteine + 3 H(+). In terms of biological role, methylates ribosomal protein L11. In Pseudomonas putida (strain ATCC 47054 / DSM 6125 / CFBP 8728 / NCIMB 11950 / KT2440), this protein is Ribosomal protein L11 methyltransferase.